Reading from the N-terminus, the 335-residue chain is Acetyl-coenzyme A carboxylase carboxyl transferase subunit alpha (335 aa).

The region spanning Thr48–Ala308 is the CoA carboxyltransferase C-terminal domain.

Belongs to the AccA family. Acetyl-CoA carboxylase is a heterohexamer composed of biotin carboxyl carrier protein (AccB), biotin carboxylase (AccC) and two subunits each of ACCase subunit alpha (AccA) and ACCase subunit beta (AccD).

It is found in the cytoplasm. The catalysed reaction is N(6)-carboxybiotinyl-L-lysyl-[protein] + acetyl-CoA = N(6)-biotinyl-L-lysyl-[protein] + malonyl-CoA. Its pathway is lipid metabolism; malonyl-CoA biosynthesis; malonyl-CoA from acetyl-CoA: step 1/1. In terms of biological role, component of the acetyl coenzyme A carboxylase (ACC) complex. First, biotin carboxylase catalyzes the carboxylation of biotin on its carrier protein (BCCP) and then the CO(2) group is transferred by the carboxyltransferase to acetyl-CoA to form malonyl-CoA. The protein is Acetyl-coenzyme A carboxylase carboxyl transferase subunit alpha of Chlorobium phaeovibrioides (strain DSM 265 / 1930) (Prosthecochloris vibrioformis (strain DSM 265)).